Consider the following 392-residue polypeptide: Probable tRNA sulfurtransferase (392 aa).

The THUMP domain maps to 59-166 (DEIIERVKKV…ECSFVFTKKV (108 aa)). ATP-binding positions include 183-184 (LL), 208-209 (HF), Arg265, Gly287, and Gln296.

The protein belongs to the ThiI family.

Its subcellular location is the cytoplasm. It catalyses the reaction [ThiI sulfur-carrier protein]-S-sulfanyl-L-cysteine + a uridine in tRNA + 2 reduced [2Fe-2S]-[ferredoxin] + ATP + H(+) = [ThiI sulfur-carrier protein]-L-cysteine + a 4-thiouridine in tRNA + 2 oxidized [2Fe-2S]-[ferredoxin] + AMP + diphosphate. The catalysed reaction is [ThiS sulfur-carrier protein]-C-terminal Gly-Gly-AMP + S-sulfanyl-L-cysteinyl-[cysteine desulfurase] + AH2 = [ThiS sulfur-carrier protein]-C-terminal-Gly-aminoethanethioate + L-cysteinyl-[cysteine desulfurase] + A + AMP + 2 H(+). Its pathway is cofactor biosynthesis; thiamine diphosphate biosynthesis. Catalyzes the ATP-dependent transfer of a sulfur to tRNA to produce 4-thiouridine in position 8 of tRNAs, which functions as a near-UV photosensor. Also catalyzes the transfer of sulfur to the sulfur carrier protein ThiS, forming ThiS-thiocarboxylate. This is a step in the synthesis of thiazole, in the thiamine biosynthesis pathway. The sulfur is donated as persulfide by IscS. In Alkaliphilus metalliredigens (strain QYMF), this protein is Probable tRNA sulfurtransferase.